The chain runs to 414 residues: Putative truncated GMC-type inactive oxidoreductase R832 (414 aa).

Positions Met-1–Ala-20 are cleaved as a signal peptide. Position 38-67 (Asp-38–Arg-67) interacts with FAD.

It belongs to the GMC oxidoreductase family. FAD is required as a cofactor.

This is Putative truncated GMC-type inactive oxidoreductase R832 from Acanthamoeba polyphaga (Amoeba).